A 466-amino-acid chain; its full sequence is Argininosuccinate lyase (466 aa).

Belongs to the lyase 1 family. Argininosuccinate lyase subfamily.

It is found in the cytoplasm. The enzyme catalyses 2-(N(omega)-L-arginino)succinate = fumarate + L-arginine. The protein operates within amino-acid biosynthesis; L-arginine biosynthesis; L-arginine from L-ornithine and carbamoyl phosphate: step 3/3. This chain is Argininosuccinate lyase, found in Campylobacter concisus (strain 13826).